The primary structure comprises 312 residues: Ribosomal RNA small subunit methyltransferase H (312 aa).

Residues 1–24 are disordered; sequence MNIMTANQGAVSPSQTESEASPPT. Residues 55–57, aspartate 72, tyrosine 96, aspartate 117, and glutamine 124 contribute to the S-adenosyl-L-methionine site; that span reads AGH. The segment at 288–312 is disordered; the sequence is EQVDNPRARSAKLRVGERAAAPEGS.

Belongs to the methyltransferase superfamily. RsmH family.

It is found in the cytoplasm. It carries out the reaction cytidine(1402) in 16S rRNA + S-adenosyl-L-methionine = N(4)-methylcytidine(1402) in 16S rRNA + S-adenosyl-L-homocysteine + H(+). In terms of biological role, specifically methylates the N4 position of cytidine in position 1402 (C1402) of 16S rRNA. The chain is Ribosomal RNA small subunit methyltransferase H from Deinococcus radiodurans (strain ATCC 13939 / DSM 20539 / JCM 16871 / CCUG 27074 / LMG 4051 / NBRC 15346 / NCIMB 9279 / VKM B-1422 / R1).